Reading from the N-terminus, the 660-residue chain is Cysteine-rich receptor-like protein kinase 22 (660 aa).

A signal peptide spans 1–24; it reads MKQRSFLSILCFILLAFGVASVSA. Gnk2-homologous domains lie at 25–128 and 137–250; these read QTCI…NISF and IEPQ…LFTF. Over 25 to 294 the chain is Extracellular; the sequence is QTCIENRKYF…DSRGVSAGIV (270 aa). N-linked (GlcNAc...) asparagine glycans are attached at residues N37, N53, N105, N125, N191, N230, and N256. Positions 264–273 are enriched in pro residues; sequence KPPMNVPRPP. The disordered stretch occupies residues 264–283; it reads KPPMNVPRPPSVGHGANTTD. Residues N280 and N284 are each glycosylated (N-linked (GlcNAc...) asparagine). The chain crosses the membrane as a helical span at residues 295–315; it reads VVITVPAVVIVLILVVLGFFI. Over 316 to 660 the chain is Cytoplasmic; sequence CWRRKSLQRT…DPLSEGLESG (345 aa). The Protein kinase domain maps to 353–632; sequence FSKSNKLGEG…IVSMLTSNTI (280 aa). ATP contacts are provided by residues 359-367 and K381; that span reads LGEGRFGEV. At Y426 the chain carries Phosphotyrosine. D478 acts as the Proton acceptor in catalysis. S482 carries the phosphoserine modification. T518 carries the post-translational modification Phosphothreonine. Y526 bears the Phosphotyrosine mark.

Belongs to the protein kinase superfamily. Ser/Thr protein kinase family. CRK subfamily.

The protein resides in the membrane. The enzyme catalyses L-seryl-[protein] + ATP = O-phospho-L-seryl-[protein] + ADP + H(+). It carries out the reaction L-threonyl-[protein] + ATP = O-phospho-L-threonyl-[protein] + ADP + H(+). The chain is Cysteine-rich receptor-like protein kinase 22 (CRK22) from Arabidopsis thaliana (Mouse-ear cress).